We begin with the raw amino-acid sequence, 228 residues long: 7-cyano-7-deazaguanine synthase (228 aa).

An ATP-binding site is contributed by 7–17 (LSGGMDSLVTT). Zn(2+) contacts are provided by Cys187, Cys195, Cys198, and Cys201.

This sequence belongs to the QueC family. Requires Zn(2+) as cofactor.

It catalyses the reaction 7-carboxy-7-deazaguanine + NH4(+) + ATP = 7-cyano-7-deazaguanine + ADP + phosphate + H2O + H(+). Its pathway is purine metabolism; 7-cyano-7-deazaguanine biosynthesis. Functionally, catalyzes the ATP-dependent conversion of 7-carboxy-7-deazaguanine (CDG) to 7-cyano-7-deazaguanine (preQ(0)). This chain is 7-cyano-7-deazaguanine synthase, found in Chlorobium chlorochromatii (strain CaD3).